A 320-amino-acid polypeptide reads, in one-letter code: Olfactory receptor 2T12 (320 aa).

Residues 1-23 (MEMRNTTPDFILLGLFNHTRAHQ) are Extracellular-facing. N-linked (GlcNAc...) asparagine glycosylation occurs at N17. The chain crosses the membrane as a helical span at residues 24 to 47 (VLFMMLLATVLTSLFSNALMILLI). The Cytoplasmic portion of the chain corresponds to 48–55 (HWDHRLHR). Residues 56 to 77 (PMYFLLSQLSLMDMMLVSTTVP) traverse the membrane as a helical segment. The Extracellular portion of the chain corresponds to 78-98 (KMAADYLTGNKAISRAGCGVQ). A disulfide bridge connects residues C95 and C187. The helical transmembrane segment at 99–118 (IFFLPTLGGGECFLLAAMAY) threads the bilayer. At 119–137 (DRYAAVCHPLRYPTLMSWQ) the chain is on the cytoplasmic side. Residues 138–156 (LCLRMTMSSWLLGAADGLL) traverse the membrane as a helical segment. The Extracellular segment spans residues 157–193 (QAVATLSFPYCGAHEIDHFFCEAPVLVRLACADTSVF). Residues 194–217 (ENAMYICCVLMLLVPFSLILSSYG) traverse the membrane as a helical segment. Topologically, residues 218 to 234 (LILAAVLLMRSTEARKK) are cytoplasmic. Residues 235 to 257 (AFATCSSHVAVVGLFYGAGIFTY) traverse the membrane as a helical segment. The Extracellular portion of the chain corresponds to 258 to 270 (MRPKSHRSTNHDK). Residues 271–290 (VVSAFYTMFTPLLNPLIYSV) traverse the membrane as a helical segment. The Cytoplasmic segment spans residues 291–320 (RNSEVKEALKRWLGTCVNLKHQQNEAHRSR).

The protein belongs to the G-protein coupled receptor 1 family.

It localises to the cell membrane. In terms of biological role, odorant receptor. This is Olfactory receptor 2T12 (OR2T12) from Homo sapiens (Human).